An 86-amino-acid polypeptide reads, in one-letter code: MLIMLIQITGIIVVLMALRTLLAQDRAERLLYLNAMSFGISAMIALYVGTAFGAVLATVYFVASTITSNAIAHTLDRVGEEMVIED.

It to M.jannaschii MJ0526.1.

This is an uncharacterized protein from Methanothermobacter thermautotrophicus (strain ATCC 29096 / DSM 1053 / JCM 10044 / NBRC 100330 / Delta H) (Methanobacterium thermoautotrophicum).